The sequence spans 323 residues: Putative HTH-type transcriptional regulatory protein Mbur_1811 (323 aa).

Residues L132 to L190 enclose the HTH cro/C1-type domain. A DNA-binding region (H-T-H motif) is located at residues L143 to E162.

This Methanococcoides burtonii (strain DSM 6242 / NBRC 107633 / OCM 468 / ACE-M) protein is Putative HTH-type transcriptional regulatory protein Mbur_1811.